Here is a 222-residue protein sequence, read N- to C-terminus: MSEKQKAVAAQERVTISKRDPWALKKWFSVYAPSYLGGVFLAEVPASEPQKLLLRTLEVSLFDITKDLSHLPIKLRFQIHKVDGLKAITRFKGLELTRDYIRSLVRKGTSKVSAIVEVKTKDGWVMRIAVLAITTHRIGSAQKSAMRKRMFDVLTRKASEMDIGQFLKEVLEGLLTADLFVAGKKIAPLRKVEIAKIKVLKYPPEEEQTTVKELTTETVAAS.

This sequence belongs to the eukaryotic ribosomal protein eS1 family.

In Pyrobaculum islandicum (strain DSM 4184 / JCM 9189 / GEO3), this protein is Small ribosomal subunit protein eS1.